We begin with the raw amino-acid sequence, 408 residues long: Aspartate aminotransferase (408 aa).

L-aspartate is bound by residues Gly45, Trp134, and Asn184. Residue Lys247 is modified to N6-(pyridoxal phosphate)lysine. Arg382 is an L-aspartate binding site.

It belongs to the class-I pyridoxal-phosphate-dependent aminotransferase family. As to quaternary structure, homodimer. Pyridoxal 5'-phosphate is required as a cofactor.

It localises to the cytoplasm. The enzyme catalyses L-aspartate + 2-oxoglutarate = oxaloacetate + L-glutamate. Its function is as follows. Catalyzes the reversible conversion of aspartate and 2-oxoglutarate to glutamate and oxaloacetate. Does not have prephenate aminotransferase activity. The protein is Aspartate aminotransferase of Streptomyces avermitilis (strain ATCC 31267 / DSM 46492 / JCM 5070 / NBRC 14893 / NCIMB 12804 / NRRL 8165 / MA-4680).